A 212-amino-acid chain; its full sequence is Adenylate kinase (212 aa).

10-15 (GAGKGT) provides a ligand contact to ATP. Residues 30–59 (AIGDIFRTIIKTSTSEAELINNYVKQGELI) form an NMP region. AMP-binding positions include Arg-36, 57–59 (ELI), 85–88 (GYPR), and Gln-92. An LID region spans residues 122–160 (GRYSCKNCGKIYNRYFVQPKTDNVCDVCGSSTFDYRKDD). An ATP-binding site is contributed by Arg-123. Zn(2+) contacts are provided by Cys-126 and Cys-129. 132–133 (IY) contacts ATP. The Zn(2+) site is built by Cys-146 and Cys-149. 2 residues coordinate AMP: Arg-157 and Arg-168. Lys-196 lines the ATP pocket.

This sequence belongs to the adenylate kinase family. In terms of assembly, monomer.

The protein resides in the cytoplasm. The catalysed reaction is AMP + ATP = 2 ADP. The protein operates within purine metabolism; AMP biosynthesis via salvage pathway; AMP from ADP: step 1/1. Its function is as follows. Catalyzes the reversible transfer of the terminal phosphate group between ATP and AMP. Plays an important role in cellular energy homeostasis and in adenine nucleotide metabolism. This Rickettsia conorii (strain ATCC VR-613 / Malish 7) protein is Adenylate kinase.